A 261-amino-acid chain; its full sequence is Epidermal growth factor-binding protein type B (261 aa).

A signal peptide spans 1–16 (MWFLILFLALSLGGID). Positions 17–24 (AAPPLQSR) are cleaved as a propeptide — activation peptide. A Peptidase S1 domain is found at 25–258 (VVGGFNCKKN…FNSWIKDTMM (234 aa)). Cystine bridges form between cysteine 31–cysteine 173, cysteine 50–cysteine 66, cysteine 152–cysteine 219, cysteine 184–cysteine 198, and cysteine 209–cysteine 234. The active-site Charge relay system is the histidine 65. The N-linked (GlcNAc...) asparagine glycan is linked to asparagine 102. Aspartate 120 (charge relay system) is an active-site residue. Residue serine 213 is the Charge relay system of the active site.

This sequence belongs to the peptidase S1 family. Kallikrein subfamily.

It catalyses the reaction Hydrolyzes mouse Ren2 protein (a species of prorenin present in the submandibular gland) on the carboxy side of the arginine residue at the Lys-Arg-|- pair in the N-terminus, to yield mature renin.. Cleaves REN2 at a dibasic site to yield mature renin. This chain is Epidermal growth factor-binding protein type B (Egfbp2), found in Mus musculus (Mouse).